Here is a 402-residue protein sequence, read N- to C-terminus: D-mannonate dehydratase (402 aa).

Substrate contacts are provided by Asn37 and His122. Tyr159 (proton donor/acceptor) is an active-site residue. Asp210 is a binding site for Mg(2+). The active-site Proton donor/acceptor is the His212. 2 residues coordinate Mg(2+): Glu236 and Glu262. Glu262, Arg283, His312, Asp316, and Glu339 together coordinate substrate.

Belongs to the mandelate racemase/muconate lactonizing enzyme family. GalD subfamily. As to quaternary structure, homotetramer. Mg(2+) is required as a cofactor.

The catalysed reaction is D-mannonate = 2-dehydro-3-deoxy-D-gluconate + H2O. It participates in carbohydrate metabolism; pentose and glucuronate interconversion. Functionally, catalyzes the dehydration of D-mannonate. Has no detectable activity with a panel of 70 other acid sugars (in vitro). The chain is D-mannonate dehydratase (manD) from Novosphingobium aromaticivorans (strain ATCC 700278 / DSM 12444 / CCUG 56034 / CIP 105152 / NBRC 16084 / F199).